Here is a 491-residue protein sequence, read N- to C-terminus: Cytochrome P450 2F2 (491 aa).

Heme is bound at residue Cys-436.

It belongs to the cytochrome P450 family. Heme serves as cofactor.

Its subcellular location is the endoplasmic reticulum membrane. The protein localises to the microsome membrane. Its function is as follows. Involved in the regio- and stereoselective transformation of naphthalene to trans-1R-hydroxy-2R-glutathionyl-1,2-dihydronaphthalene in the presence of glutathione and glutathione S-transferases. It specifically catalyzes the production of a very reactive and potentially toxic intermediate, the 2R,2S arene oxide, that is associated with necrosis of the unciliated bronchiolar epithelial cells or club cells in lung. This Rattus norvegicus (Rat) protein is Cytochrome P450 2F2 (Cyp2f2).